An 819-amino-acid chain; its full sequence is MNNSPTLSNTRNRKNNNNNSNSNSNSNNNNNNNNNNNNNSNNNNNNNNNVNRNVNNRNNNNNNIINVNNNVSSTTMNMAKDFMNWNDGIIEREDTQLQQQKDRCFKILKKSTIACIVLLFISCTIIYSMTQYPSVSGGDAGELIVVAHQFGVAHPPGYPLFTFLGYIFSHIIPSNTLSVAWKISFMSSMIGSIASIFIYLTVYLWVNNHWCGLLSAYMFTFSPLIWMYQIQGEVFSMNNMFVAMLMFLGVWYTRVRIFENERYNTAFWTSERIAYLSAFSCAIGLTNQHTLVLIVIPFAFWLMFISGRDQLWNIKILSNLVFYTLIGLSPYLLLFITPKLNRVKYSWGNTSTLRGFIKHFLREEYGTLQLYGGDGGVISLFTKISIYIENLIIQFGYIGLALSLIGLLNLLLGYNIRTFKWKSFGTMIIFSFLFYITFFFNLCNLPIDKPLYRGVFLRFFMQPNVIISITMGLGIKSIFGFLNRIQRDGGTAATTTTTISKIQKYLLPIIIILLVGNQIGFNYNLQDQSDNYSFYDYGHSVLDGLPRNTLLLVGGDLVTNVPMYLHLCEKVRPDIDILSMEIMSWEWFKITQSPLFQRVKFPGNVYHPYIPDGYSLKDFLDANINDRPIYIGGDFKSGDSSFQNDYYTISKGLTSQIIPKKDSHKFNTFKIIKTTFSTFPSFHIPNNTEKYPNDSWEHFMMEEMAVSLERAAETLLKEYLSQQNTESFKALELSVEILEKALTYVNDKCWSLKHLGICFDHLRYRVVQNVNNNNQQAQNKASNYSKQLLYFWKKYINQCTHEENTDQDWETIKKVIQLI.

Residues 1–10 show a composition bias toward polar residues; sequence MNNSPTLSNT. Residues 1–68 are disordered; that stretch reads MNNSPTLSNT…NNNNNIINVN (68 aa). The segment covering 15-68 has biased composition (low complexity); sequence NNNNNSNSNSNSNNNNNNNNNNNNNSNNNNNNNNNVNRNVNNRNNNNNNIINVN. N-linked (GlcNAc...) asparagine glycans are attached at residues Asn18, Asn38, and Asn70. 7 helical membrane passes run 113–133, 152–172, 185–205, 210–230, 232–252, 285–305, and 316–336; these read IACI…TQYP, VAHP…SHII, FMSS…VYLW, WCGL…MYQI, GEVF…GVWY, LTNQ…LMFI, and ILSN…LLFI. Residue Asn349 is glycosylated (N-linked (GlcNAc...) asparagine). A run of 4 helical transmembrane segments spans residues 391–411, 427–447, 459–479, and 505–525; these read LIIQ…LNLL, MIIF…NLPI, FFMQ…KSIF, and YLLP…NYNL. 4 N-linked (GlcNAc...) asparagine glycosylation sites follow: Asn531, Asn686, Asn693, and Asn783.

It belongs to the glycosyltransferase 117 (GT117) family.

The protein resides in the endoplasmic reticulum membrane. The catalysed reaction is a di-trans,poly-cis-dolichyl beta-D-mannosyl phosphate + L-seryl-[protein] = 3-O-(alpha-D-mannosyl)-L-seryl-[protein] + a di-trans,poly-cis-dolichyl phosphate + H(+). The enzyme catalyses a di-trans,poly-cis-dolichyl beta-D-mannosyl phosphate + L-threonyl-[protein] = 3-O-(alpha-D-mannosyl)-L-threonyl-[protein] + a di-trans,poly-cis-dolichyl phosphate + H(+). O-mannosyl-transferase that transfers mannosyl residues to the hydroxyl group of serine or threonine residues of proteins. The protein is Protein O-mannosyl-transferase tmem260 of Dictyostelium discoideum (Social amoeba).